The primary structure comprises 676 residues: Electrogenic aspartate/glutamate antiporter SLC25A13, mitochondrial (676 aa).

An N-acetylalanine modification is found at Ala2. The segment at 2-295 (AAAKVALTKR…TLADIERIAP (294 aa)) is regulatory N-terminal domain. Topologically, residues 2-332 (AAAKVALTKR…LLQLAESAYR (331 aa)) are mitochondrial intermembrane. Position 18 is an N6-acetyllysine (Lys18). 4 EF-hand domains span residues 51-86 (SQPN…SVLC), 87-122 (APDA…TTIH), 123-157 (QHIP…FLLE), and 158-193 (IQLE…IRPH). Positions 66, 68, 70, 72, and 77 each coordinate Ca(2+). The interval 296–311 (LEEGMLPFNLAEAQRQ) is linker loop domain. The segment at 322-613 (FLLQLAESAY…LQRWFYVDFG (292 aa)) is carrier domain. 3 Solcar repeats span residues 327–419 (AESA…VRDK), 427–511 (VPLL…VKAS), and 519–607 (VSPG…LQRW). The helical transmembrane segment at 333 to 350 (FGLGSIAGAVGATAVYPI) threads the bilayer. At 351 to 393 (DLVKTRMQNQRSTGSFVGELMYKNSFDCFKKVLRYEGFFGLYR) the chain is on the mitochondrial matrix side. N6-acetyllysine is present on residues Lys354 and Lys373. A helical transmembrane segment spans residues 394 to 413 (GLLPQLLGVAPEKAIKLTVN). The Mitochondrial intermembrane portion of the chain corresponds to 414-436 (DFVRDKFMHKDGSVPLLAEIFAG). Residues 437-450 (GCAGGSQVIFTNPL) traverse the membrane as a helical segment. Residues 451 to 485 (EIVKIRLQVAGEITTGPRVSALSVVRDLGFFGIYK) lie on the Mitochondrial matrix side of the membrane. Lys454 bears the N6-methyllysine mark. The residue at position 485 (Lys485) is an N6-acetyllysine; alternate. At Lys485 the chain carries N6-succinyllysine; alternate. A helical transmembrane segment spans residues 486–505 (GAKACFLRDIPFSAIYFPCY). Residues 506-524 (AHVKASFANEDGQVSPGSL) lie on the Mitochondrial intermembrane side of the membrane. The helical transmembrane segment at 525 to 542 (LLAGAIAGMPAASLVTPA) threads the bilayer. Residues 543-581 (DVIKTRLQVAARAGQTTYNGVTDCFRKILREEGPKALWK) lie on the Mitochondrial matrix side of the membrane. Position 581 is an N6-succinyllysine (Lys581). A helical transmembrane segment spans residues 582–601 (GVAARVFRSSPQFGVTLLTY). At 602–676 (ELLQRWFYVD…STSKVTAGDS (75 aa)) the chain is on the mitochondrial intermembrane side. Positions 614 to 676 (GVKPVGSEPV…STSKVTAGDS (63 aa)) are C-terminal domain. An N6-acetyllysine modification is found at Lys663. A Phosphoserine modification is found at Ser667.

The protein belongs to the mitochondrial carrier (TC 2.A.29) family. As to quaternary structure, homodimer (via N-terminus). In terms of tissue distribution, at 10.5 dpc, expressed in branchial arches, a well as in the limb and tail buds. At 13.5 dpc expression is predominant in epithelial structures and the forebrain, kidney and liver. Expression in liver is maintained into adulthood.

The protein resides in the mitochondrion inner membrane. It carries out the reaction L-aspartate(in) + L-glutamate(out) + H(+)(out) = L-aspartate(out) + L-glutamate(in) + H(+)(in). The enzyme catalyses 3-sulfino-L-alanine(out) + L-glutamate(in) + H(+)(in) = 3-sulfino-L-alanine(in) + L-glutamate(out) + H(+)(out). It catalyses the reaction 3-sulfino-L-alanine(out) + L-aspartate(in) = 3-sulfino-L-alanine(in) + L-aspartate(out). Its function is as follows. Mitochondrial electrogenic aspartate/glutamate antiporter that favors efflux of aspartate and entry of glutamate and proton within the mitochondria as part of the malate-aspartate shuttle. Also mediates the uptake of L-cysteinesulfinate (3-sulfino-L-alanine) by mitochondria in exchange of L-glutamate and proton. Can also exchange L-cysteinesulfinate with aspartate in their anionic form without any proton translocation. Lacks transport activity towards gamma-aminobutyric acid (GABA). This Mus musculus (Mouse) protein is Electrogenic aspartate/glutamate antiporter SLC25A13, mitochondrial.